The following is a 136-amino-acid chain: Large ribosomal subunit protein uL13 (136 aa).

It belongs to the universal ribosomal protein uL13 family. As to quaternary structure, part of the 50S ribosomal subunit.

Functionally, this protein is one of the early assembly proteins of the 50S ribosomal subunit, although it is not seen to bind rRNA by itself. It is important during the early stages of 50S assembly. In Thermoplasma volcanium (strain ATCC 51530 / DSM 4299 / JCM 9571 / NBRC 15438 / GSS1), this protein is Large ribosomal subunit protein uL13.